A 231-amino-acid polypeptide reads, in one-letter code: NADH-ubiquinone oxidoreductase chain 4 (231 aa).

Transmembrane regions (helical) follow at residues 1–21 (PIAGSMVLAAILLKLGGYGMI), 34–54 (MFIPFITLSLWGAVLANLTCL), 62–82 (LIAYSSISHMGLVVAAISIQT), 86–106 (LSGAMALMIAHGFTSSALFCL), 118–138 (ILILTRGFHNILPMTTTWWLL), 169–189 (TIILLSLSILITSIYSLHIFL), and 211–231 (LLMTLHIIPLILLSMKPELVM).

It belongs to the complex I subunit 4 family.

The protein resides in the mitochondrion membrane. The catalysed reaction is a ubiquinone + NADH + 5 H(+)(in) = a ubiquinol + NAD(+) + 4 H(+)(out). Functionally, core subunit of the mitochondrial membrane respiratory chain NADH dehydrogenase (Complex I) that is believed to belong to the minimal assembly required for catalysis. Complex I functions in the transfer of electrons from NADH to the respiratory chain. The immediate electron acceptor for the enzyme is believed to be ubiquinone. In Causus rhombeatus (Rhombic night adder), this protein is NADH-ubiquinone oxidoreductase chain 4 (MT-ND4).